A 395-amino-acid polypeptide reads, in one-letter code: Tyrosine--tRNA ligase 2 (395 aa).

The 'HIGH' region motif lies at 42–51; it reads PTAPDIHLGH. Residues 226-230 carry the 'KMSKS' region motif; the sequence is KMSKS. Lysine 229 is a binding site for ATP. The 61-residue stretch at 334–394 folds into the S4 RNA-binding domain; sequence TPVANLLKDA…GKRKFARITI (61 aa).

The protein belongs to the class-I aminoacyl-tRNA synthetase family. TyrS type 2 subfamily. Homodimer.

Its subcellular location is the cytoplasm. It carries out the reaction tRNA(Tyr) + L-tyrosine + ATP = L-tyrosyl-tRNA(Tyr) + AMP + diphosphate + H(+). Functionally, catalyzes the attachment of tyrosine to tRNA(Tyr) in a two-step reaction: tyrosine is first activated by ATP to form Tyr-AMP and then transferred to the acceptor end of tRNA(Tyr). The chain is Tyrosine--tRNA ligase 2 from Vibrio parahaemolyticus serotype O3:K6 (strain RIMD 2210633).